Here is a 439-residue protein sequence, read N- to C-terminus: MATKEYFPGIGKIKFEGKDSKNPMAFRYYDAEKMINGRSMKDWLKFAMAWWHTLCAEGGDQFGGGTKQFPWNGDPDPVQAAKNKMDAGFEFMQKMGIGYYCFHDVDLVTEADSIEAYEANLKELVAYAKQKQAETGIKLLWGTANVFSHARYMNGAATNPDFDVVARAAVQIKNAIDATIELGGTNYVFWGGREGYMSLLNTDQKREKEHLAQMLTIARDYGRARGFKGTFLIEPKPMEPTKHQYDVDTETVIGFLKAHGLDQDFKVNIEVNHATLAGHTFEHELAVAVDNGMLGSIDANRGDYQNGWDTDQFPIDNFELTQAMMQIIRNDGLGNGGTNFDAKTRRNSTDPEDIFIAHIAGMDAMARALESAANLLNESPYQKMLSDRYASFDAGKGKEFEEGKLSLEELVAYAKANGEPKQTSGQQELYEALVNIYSL.

Residues His-103 and Asp-106 contribute to the active site. Mg(2+) contacts are provided by Glu-234, Glu-270, His-273, Asp-298, Asp-309, Asp-311, and Asp-341.

The protein belongs to the xylose isomerase family. In terms of assembly, homotetramer. The cofactor is Mg(2+).

Its subcellular location is the cytoplasm. The catalysed reaction is alpha-D-xylose = alpha-D-xylulofuranose. The polypeptide is Xylose isomerase (Bacteroides fragilis (strain YCH46)).